Reading from the N-terminus, the 569-residue chain is MNDKDLKKLTAKSLGREKAELVLKNAQVINVFSEEILVRDVAVGDGMIVGVGQYQGREEVDLSGKYLCPGFIDAHLHLESTLVAPPELIHSALQWGTTTFIIDPHEVVNVAGEEGLDYMLEQTEGLAANVFVMLPSCVPAVPFEENGGVFTAEKMEPYLANPRVLGLGEVMDYVSVIGAEEEMVKKLRLFRERIKDGHAPYLQDKQLAAYALAGIKTDHECIDYAYALEEIRNGMQVLIREGSGARNLAAIVRGIRENNLDTGNFSFCTDDKHINDIQREGHISYNIKKSIALGLPPLKAIKMATLNTARCYNLTELGAVAPGYQADFVILDSLEEVAVHAVYHKGKKVEREKKIDIKPCSEQLRRTVHLPALSAEDLKLAVPDSPSSLIQMSEGQITTKHVRDVLPARDGCFVPNAQYNKVVVVERHKGTGHFAVAPVLGFNLGQGAIATSVSHDSHNVVAIGDNDESILLALQELQRVQGGYTMIREQRVLATLPLPIMGLISDAGHQAVESMLNTMVGYAHEMGVPASIHPFIALSFIALPVIPEIRITTRGLYDAVEQKFIRYIP.

This sequence belongs to the metallo-dependent hydrolases superfamily. Adenine deaminase family. Mn(2+) serves as cofactor.

It carries out the reaction adenine + H2O + H(+) = hypoxanthine + NH4(+). The sequence is that of Adenine deaminase from Desulfitobacterium hafniense (strain Y51).